The sequence spans 441 residues: Xaa-Pro dipeptidase (441 aa).

The Mn(2+) site is built by aspartate 244, aspartate 255, histidine 336, glutamate 381, and glutamate 420.

It belongs to the peptidase M24B family. Bacterial-type prolidase subfamily. It depends on Mn(2+) as a cofactor.

The enzyme catalyses Xaa-L-Pro dipeptide + H2O = an L-alpha-amino acid + L-proline. In terms of biological role, splits dipeptides with a prolyl residue in the C-terminal position. This is Xaa-Pro dipeptidase from Xanthomonas axonopodis pv. citri (strain 306).